The following is a 941-amino-acid chain: Protein translocase subunit SecA (941 aa).

ATP is bound by residues Q87, 105-109 (GEGKT), and D524. A disordered region spans residues 871–919 (DEQPPMPAMEAHKLDPNTGEDQVAQAQSGLAPVAPAKRDPANPATWGKV). Residues C925, C927, C936, and H937 each coordinate Zn(2+).

The protein belongs to the SecA family. In terms of assembly, monomer and homodimer. Part of the essential Sec protein translocation apparatus which comprises SecA, SecYEG and auxiliary proteins SecDF-YajC and YidC. The cofactor is Zn(2+).

It localises to the cell inner membrane. The protein localises to the cytoplasm. The enzyme catalyses ATP + H2O + cellular proteinSide 1 = ADP + phosphate + cellular proteinSide 2.. In terms of biological role, part of the Sec protein translocase complex. Interacts with the SecYEG preprotein conducting channel. Has a central role in coupling the hydrolysis of ATP to the transfer of proteins into and across the cell membrane, serving both as a receptor for the preprotein-SecB complex and as an ATP-driven molecular motor driving the stepwise translocation of polypeptide chains across the membrane. The protein is Protein translocase subunit SecA of Afipia carboxidovorans (strain ATCC 49405 / DSM 1227 / KCTC 32145 / OM5) (Oligotropha carboxidovorans).